Reading from the N-terminus, the 441-residue chain is MSNVTHQPKIGFVSLGCPKNLVDSERILTELRTEGYDVVPRYDDADMVIVNTCGFIDSAVQESLEAIGEALNENGKVIVTGCLGAKEDQIREVHPKVLEITGPHSYEQVLQHVHHYVPKPKHNPFLSLVPEQGVKLTPRHYAYLKISEGCNHRCTFCIIPSMRGDLVSRPIGDVLSEAKRLVDAGVKEILVISQDTSAYGVDVKHRTGFHNGEPVKTSMVSLCEQLSKLGVWTRLHYVYPYPHVDDVIPLMAEGKILPYLDIPLQHASPRILKLMKRPGSVDRQLARIKQWREICPELTLRSTFIVGFPGETEEDFQMLLDFLKEARLDRVGCFKYSPVEGAGANELPDQVPEEVKEERWNRFMQLQQQISAERLQEKVGREILVIVDEVDEEGAIGRSMADAPEIDGAVYLNGETNVKPGDIVRVKVENADEYDLWGSRV.

Positions 8–118 constitute an MTTase N-terminal domain; the sequence is PKIGFVSLGC…VLQHVHHYVP (111 aa). Residues Cys-17, Cys-53, Cys-82, Cys-150, Cys-154, and Cys-157 each coordinate [4Fe-4S] cluster. In terms of domain architecture, Radical SAM core spans 136–373; sequence LTPRHYAYLK…MQLQQQISAE (238 aa). The 66-residue stretch at 376–441 folds into the TRAM domain; the sequence is QEKVGREILV…DEYDLWGSRV (66 aa).

The protein belongs to the methylthiotransferase family. RimO subfamily. Requires [4Fe-4S] cluster as cofactor.

It is found in the cytoplasm. The enzyme catalyses L-aspartate(89)-[ribosomal protein uS12]-hydrogen + (sulfur carrier)-SH + AH2 + 2 S-adenosyl-L-methionine = 3-methylsulfanyl-L-aspartate(89)-[ribosomal protein uS12]-hydrogen + (sulfur carrier)-H + 5'-deoxyadenosine + L-methionine + A + S-adenosyl-L-homocysteine + 2 H(+). Catalyzes the methylthiolation of an aspartic acid residue of ribosomal protein uS12. This Salmonella agona (strain SL483) protein is Ribosomal protein uS12 methylthiotransferase RimO.